An 84-amino-acid polypeptide reads, in one-letter code: UPF0298 protein NWMN_0985 (84 aa).

Belongs to the UPF0298 family.

The protein localises to the cytoplasm. This is UPF0298 protein NWMN_0985 from Staphylococcus aureus (strain Newman).